Consider the following 409-residue polypeptide: NADH-quinone oxidoreductase subunit D (409 aa).

The protein belongs to the complex I 49 kDa subunit family. In terms of assembly, NDH-1 is composed of 14 different subunits. Subunits NuoB, C, D, E, F, and G constitute the peripheral sector of the complex.

It is found in the cell inner membrane. It catalyses the reaction a quinone + NADH + 5 H(+)(in) = a quinol + NAD(+) + 4 H(+)(out). In terms of biological role, NDH-1 shuttles electrons from NADH, via FMN and iron-sulfur (Fe-S) centers, to quinones in the respiratory chain. The immediate electron acceptor for the enzyme in this species is believed to be ubiquinone. Couples the redox reaction to proton translocation (for every two electrons transferred, four hydrogen ions are translocated across the cytoplasmic membrane), and thus conserves the redox energy in a proton gradient. This is NADH-quinone oxidoreductase subunit D from Helicobacter pylori (strain Shi470).